We begin with the raw amino-acid sequence, 1228 residues long: Probable phospholipid-transporting ATPase 5 (1228 aa).

The Cytoplasmic segment spans residues 1–74 (MARGRIRSKL…TTRYNLITFF (74 aa)). The chain crosses the membrane as a helical span at residues 75-96 (PKSLYEQFHRAANLYFLVAAIL). The Extracellular portion of the chain corresponds to 97–100 (SVFP). The helical transmembrane segment at 101 to 123 (LSPFNKWSMIAPLVFVVGLSMLK) threads the bilayer. Residues 124 to 305 (EALEDWRRFM…SRIERTMDYI (182 aa)) lie on the Cytoplasmic side of the membrane. Residues 306–327 (IYTLLVLLILISCISSSGFAWE) traverse the membrane as a helical segment. At 328–359 (TEFHMPKMWYLRPGEPIDFTNPINPIYAGVVH) the chain is on the extracellular side. Residues 360 to 377 (LITALLLYGYLIPISLYV) traverse the membrane as a helical segment. At 378–934 (SIEVVKVWQA…HGHWCYKRIA (557 aa)) the chain is on the cytoplasmic side. Asp-425 serves as the catalytic 4-aspartylphosphate intermediate. Lys-616 participates in a covalent cross-link: Glycyl lysine isopeptide (Lys-Gly) (interchain with G-Cter in ubiquitin). The Mg(2+) site is built by Asp-879 and Asp-883. A helical membrane pass occupies residues 935 to 954 (QMICYFFYKNIAFGLTLFYF). At 955-968 (EAFTGFSGQSVYND) the chain is on the extracellular side. Residues 969–988 (YYLLLFNVVLTSLPVIALGV) form a helical membrane-spanning segment. Topologically, residues 989–1018 (FEQDVSSEICLQFPALYQQGTKNLFFDWSR) are cytoplasmic. Residues 1019–1041 (ILGWMCNGVYASLVIFFLNIGII) form a helical membrane-spanning segment. The Extracellular portion of the chain corresponds to 1042-1054 (YSQAFRDNGQTAD). A helical transmembrane segment spans residues 1055-1077 (MDAVGTTMFTCIIWAANVQIALT). Over 1078 to 1083 (MSHFTW) the chain is Cytoplasmic. The chain crosses the membrane as a helical span at residues 1084 to 1104 (IQHVLIWGSIGMWYLFVAIYS). Topologically, residues 1105–1117 (MMPPSYSGNIYRI) are extracellular. Residues 1118-1146 (LDEILAPAPIYWMATLLVTVAAVLPYVAH) traverse the membrane as a helical segment. Residues 1147–1228 (IAFQRFLNPL…AQDAMSPRSL (82 aa)) are Cytoplasmic-facing.

Belongs to the cation transport ATPase (P-type) (TC 3.A.3) family. Type IV subfamily.

Its subcellular location is the membrane. The enzyme catalyses ATP + H2O + phospholipidSide 1 = ADP + phosphate + phospholipidSide 2.. Involved in transport of phospholipids. The sequence is that of Probable phospholipid-transporting ATPase 5 from Arabidopsis thaliana (Mouse-ear cress).